Consider the following 311-residue polypeptide: Ribonuclease HIII (311 aa).

One can recognise an RNase H type-2 domain in the interval 93 to 310 (LSAIGSDEVG…TKKALDIAKH (218 aa)). Residues aspartate 99, glutamate 100, and aspartate 204 each coordinate a divalent metal cation.

This sequence belongs to the RNase HII family. RnhC subfamily. Mn(2+) serves as cofactor. Requires Mg(2+) as cofactor.

Its subcellular location is the cytoplasm. It carries out the reaction Endonucleolytic cleavage to 5'-phosphomonoester.. Functionally, endonuclease that specifically degrades the RNA of RNA-DNA hybrids. The chain is Ribonuclease HIII from Geobacillus kaustophilus (strain HTA426).